The following is a 348-amino-acid chain: MTAPSQVLKIHRPDDWHVHLRDGDMLKTVVPYTSEIYGRAIVMPNLASPITTVDAAIAYRQRILDAVPAGHDFTPLMTCYLTDSLDADELERGFHEGVFTAAKLYPANATTNSSHGVTSIDAIMPVLERMEKLGMPLLVHGEVTHADVDIFDREARFIDTVMEPLRQRLTALKVVFEHITTKDAAQYVRDGNDYLAATITPQHLMFNRNHMLVGGIRPHLYCLPILKRNIHQQALRELVASGFTRAFLGTDSAPHSRHRKETSCGCAGCFNAPSALGSYAVVFEEMNALAHFEAFCSLNGPQFYGLPVNKGWVELVRDEQQIPENIALADDSLVPFLAGETVRWSVKK.

Zn(2+) contacts are provided by H17 and H19. Residues 19–21 (HLR) and N45 contribute to the substrate site. Residues K103, H140, and H178 each contribute to the Zn(2+) site. K103 carries the N6-carboxylysine modification. H140 contributes to the substrate binding site. L223 provides a ligand contact to substrate. D251 contacts Zn(2+). D251 is an active-site residue. The substrate site is built by H255 and A267.

It belongs to the metallo-dependent hydrolases superfamily. DHOase family. Class II DHOase subfamily. Homodimer. The cofactor is Zn(2+).

The catalysed reaction is (S)-dihydroorotate + H2O = N-carbamoyl-L-aspartate + H(+). Its pathway is pyrimidine metabolism; UMP biosynthesis via de novo pathway; (S)-dihydroorotate from bicarbonate: step 3/3. Catalyzes the reversible cyclization of carbamoyl aspartate to dihydroorotate. The sequence is that of Dihydroorotase from Salmonella arizonae (strain ATCC BAA-731 / CDC346-86 / RSK2980).